The chain runs to 319 residues: Acetyl-coenzyme A carboxylase carboxyl transferase subunit alpha (319 aa).

A CoA carboxyltransferase C-terminal domain is found at 35 to 296; the sequence is NIDEEVHRLR…KAQLLADLAD (262 aa).

Belongs to the AccA family. Acetyl-CoA carboxylase is a heterohexamer composed of biotin carboxyl carrier protein (AccB), biotin carboxylase (AccC) and two subunits each of ACCase subunit alpha (AccA) and ACCase subunit beta (AccD).

The protein localises to the cytoplasm. It carries out the reaction N(6)-carboxybiotinyl-L-lysyl-[protein] + acetyl-CoA = N(6)-biotinyl-L-lysyl-[protein] + malonyl-CoA. It functions in the pathway lipid metabolism; malonyl-CoA biosynthesis; malonyl-CoA from acetyl-CoA: step 1/1. Functionally, component of the acetyl coenzyme A carboxylase (ACC) complex. First, biotin carboxylase catalyzes the carboxylation of biotin on its carrier protein (BCCP) and then the CO(2) group is transferred by the carboxyltransferase to acetyl-CoA to form malonyl-CoA. This chain is Acetyl-coenzyme A carboxylase carboxyl transferase subunit alpha, found in Escherichia coli O139:H28 (strain E24377A / ETEC).